Consider the following 600-residue polypeptide: RNA-binding protein 47 (600 aa).

Residues methionine 1–serine 25 are compositionally biased toward low complexity. Residues methionine 1–glycine 37 are disordered. RRM domains lie at cysteine 82–aspartate 160, cysteine 162–proline 244, and lysine 257–proline 329.

It belongs to the RRM RBM47 family. Homodimer. May interact with MAVS; may regulate MAVS lysosomal degradation.

Its subcellular location is the nucleus. It is found in the cytoplasm. Functionally, single-stranded RNA-binding protein that functions in a variety of RNA processes, including alternative splicing, RNA stabilization, and RNA editing. Independently of its RNA-binding activity, could negatively regulate MAVS by promoting its lysosomal degradation. This chain is RNA-binding protein 47 (rbm47), found in Danio rerio (Zebrafish).